The sequence spans 436 residues: Prenyltransferase nscD (436 aa).

This sequence belongs to the tryptophan dimethylallyltransferase family.

It participates in secondary metabolite biosynthesis. Its function is as follows. Prenyltransferase; part of the gene cluster that mediates the biosynthesis of neosartoricin B, a prenylated anthracenone that probably exhibits T-cell antiproliferative activity, suggestive of a physiological role as an immunosuppressive agent. The non-reducing polyketide synthase nscA probably synthesizes and cyclizes the decaketide backbone. The hydrolase nscB then mediates the product release through hydrolysis followed by spontaneous decarboxylation. The prenyltransferase nscD catalyzes the addition of the dimethylallyl group to the aromatic C5. The FAD-dependent monooxygenase nscC is then responsible for the stereospecific hydroxylation at C2. Neosartoricin B can be converted into two additional compounds neosartoricins C and D. Neosartoricin C is a spirocyclic compound that is cyclized through the attack of C3 hydroxyl on C14, followed by dehydration. On the other hand, neosartoricin D is a further cyclized compound in which attack of C2 on C14 in neosartoricin C results in the formation of the acetal-containing dioxabicyclo-octanone ring. Both of these compounds are novel and possibly represent related metabolites of the gene cluster. The sequence is that of Prenyltransferase nscD from Trichophyton equinum (strain ATCC MYA-4606 / CBS 127.97) (Horse ringworm fungus).